Here is a 158-residue protein sequence, read N- to C-terminus: Ribosome maturation factor RimP (158 aa).

This sequence belongs to the RimP family.

The protein resides in the cytoplasm. In terms of biological role, required for maturation of 30S ribosomal subunits. This chain is Ribosome maturation factor RimP, found in Pseudomonas syringae pv. tomato (strain ATCC BAA-871 / DC3000).